A 1139-amino-acid polypeptide reads, in one-letter code: Ras GTPase-activating protein nGAP (1139 aa).

A disordered region spans residues 1-87 (MQTPEVPAER…SRGLPKLKES (87 aa)). At Ser16 the chain carries Phosphoserine. The segment covering 17 to 36 (ISGTSTSEKPNSMDTANTSP) has biased composition (polar residues). The 118-residue stretch at 41–158 (GFFSKRLKGS…WMENLRRTVQ (118 aa)) folds into the PH domain. Positions 45–56 (KRLKGSIKRTKS) are enriched in basic residues. Residues 73–87 (STDDRSRGLPKLKES) show a composition bias toward basic and acidic residues. Ser89 bears the Phosphoserine mark. The 119-residue stretch at 149-267 (WMENLRRTVQ…TGRQFVEKWY (119 aa)) folds into the C2 domain. The 209-residue stretch at 343–551 (GRAKDFLTDL…GGMKRFLLEI (209 aa)) folds into the Ras-GAP domain. Residue Thr620 is modified to Phosphothreonine. Ser663 bears the Phosphoserine mark. Disordered regions lie at residues 684–704 (ASSQSMTYSEKDERESSLPNG), 751–782 (ETQSTPQSAPQVRRPLHPALNQPGGLQPLSFQ), 803–869 (SLEN…GQAQ), 910–953 (EPVQ…SATM), and 1116–1139 (NGISPTNPTKLSITENGEFKNSSC). Composition is skewed to polar residues over residues 751–760 (ETQSTPQSAP) and 803–818 (SLENLSTASSRSQSNS). Over residues 833–855 (DFTKRSTQSEDFSRRHTVPDRHI) the composition is skewed to basic and acidic residues. Phosphoserine is present on Ser864. A compositionally biased stretch (low complexity) spans 916-928 (SRSRQQSSSSRES).

In terms of assembly, interacts with PEAK1.

Functionally, inhibitory regulator of the Ras-cyclic AMP pathway. This is Ras GTPase-activating protein nGAP (RASAL2) from Homo sapiens (Human).